A 464-amino-acid polypeptide reads, in one-letter code: Secretion-regulating guanine nucleotide exchange factor (464 aa).

RCC1 repeat units follow at residues 15-67 (AVLF…VTDG), 68-119 (GDLF…LTEK), 120-171 (GQVL…TTAT), 172-230 (GSVF…LTDT), 231-283 (GELY…KTET), 284-351 (GKVF…VIRD), and 352-402 (KCCS…LAVC). A disordered region spans residues 422–464 (DDTENTESQGAVDRDRLEGETISDLNPDRTRNGGGGCESETVQ). Ser429 carries the post-translational modification Phosphoserine.

In terms of assembly, interacts with SEC5. The interaction occurs only in the presence of magnesium or manganese and is stimulated by dCTP or GTP.

The protein localises to the cytoplasm. It is found in the nucleus. In terms of biological role, probable guanine nucleotide exchange factor (GEF), which may be involved in the secretion process. The sequence is that of Secretion-regulating guanine nucleotide exchange factor (Sergef) from Mus musculus (Mouse).